Consider the following 545-residue polypeptide: Chaperonin GroEL 2 (545 aa).

Residues 30 to 33 (TLGP), Lys-51, 87 to 91 (DGTTT), Gly-415, 479 to 481 (NAA), and Asp-495 contribute to the ATP site.

It belongs to the chaperonin (HSP60) family. Forms a cylinder of 14 subunits composed of two heptameric rings stacked back-to-back. Interacts with the co-chaperonin GroES.

The protein resides in the cytoplasm. The catalysed reaction is ATP + H2O + a folded polypeptide = ADP + phosphate + an unfolded polypeptide.. Its function is as follows. Together with its co-chaperonin GroES, plays an essential role in assisting protein folding. The GroEL-GroES system forms a nano-cage that allows encapsulation of the non-native substrate proteins and provides a physical environment optimized to promote and accelerate protein folding. The chain is Chaperonin GroEL 2 from Escherichia coli O1:K1 / APEC.